Reading from the N-terminus, the 259-residue chain is Deoxyribose-phosphate aldolase (259 aa).

Asp102 functions as the Proton donor/acceptor in the catalytic mechanism. Lys167 functions as the Schiff-base intermediate with acetaldehyde in the catalytic mechanism. Lys201 acts as the Proton donor/acceptor in catalysis.

The protein belongs to the DeoC/FbaB aldolase family. DeoC type 2 subfamily.

It is found in the cytoplasm. The enzyme catalyses 2-deoxy-D-ribose 5-phosphate = D-glyceraldehyde 3-phosphate + acetaldehyde. The protein operates within carbohydrate degradation; 2-deoxy-D-ribose 1-phosphate degradation; D-glyceraldehyde 3-phosphate and acetaldehyde from 2-deoxy-alpha-D-ribose 1-phosphate: step 2/2. Functionally, catalyzes a reversible aldol reaction between acetaldehyde and D-glyceraldehyde 3-phosphate to generate 2-deoxy-D-ribose 5-phosphate. The polypeptide is Deoxyribose-phosphate aldolase (Escherichia fergusonii (strain ATCC 35469 / DSM 13698 / CCUG 18766 / IAM 14443 / JCM 21226 / LMG 7866 / NBRC 102419 / NCTC 12128 / CDC 0568-73)).